A 283-amino-acid chain; its full sequence is tRNA-cytidine(32) 2-sulfurtransferase (283 aa).

Positions 32–37 (SGGKDS) match the PP-loop motif motif. 3 residues coordinate [4Fe-4S] cluster: cysteine 107, cysteine 110, and cysteine 198.

The protein belongs to the TtcA family. Homodimer. It depends on Mg(2+) as a cofactor. [4Fe-4S] cluster serves as cofactor.

The protein localises to the cytoplasm. It catalyses the reaction cytidine(32) in tRNA + S-sulfanyl-L-cysteinyl-[cysteine desulfurase] + AH2 + ATP = 2-thiocytidine(32) in tRNA + L-cysteinyl-[cysteine desulfurase] + A + AMP + diphosphate + H(+). The protein operates within tRNA modification. Catalyzes the ATP-dependent 2-thiolation of cytidine in position 32 of tRNA, to form 2-thiocytidine (s(2)C32). The sulfur atoms are provided by the cysteine/cysteine desulfurase (IscS) system. This chain is tRNA-cytidine(32) 2-sulfurtransferase, found in Sorangium cellulosum (strain So ce56) (Polyangium cellulosum (strain So ce56)).